The primary structure comprises 335 residues: Serpentine receptor class alpha-25 (335 aa).

Transmembrane regions (helical) follow at residues isoleucine 22–alanine 42, leucine 151–proline 171, phenylalanine 195–valine 215, cysteine 245–isoleucine 265, and leucine 280–phenylalanine 300.

The protein belongs to the nematode receptor-like protein sra family.

It localises to the membrane. This chain is Serpentine receptor class alpha-25 (sra-25), found in Caenorhabditis elegans.